A 262-amino-acid polypeptide reads, in one-letter code: Troponin T, slow skeletal muscle (262 aa).

Residues 1–31 (MSDAEEQEYEEEQPEEEEAAEEEEAPEEPEP) show a composition bias toward acidic residues. Disordered stretches follow at residues 1 to 59 (MSDA…PEGE), 107 to 153 (RAER…KKKV), and 165 to 197 (LVKAEQKRGKRQTGREMKQRILSERKKPLNIDH). Ser2 bears the Phosphoserine; by CK2 mark. The span at 32 to 41 (VAEREEERPK) shows a compositional bias: basic and acidic residues. Pro residues predominate over residues 43–55 (SRPVVPPLIPPKI). 2 stretches are compositionally biased toward basic and acidic residues: residues 107–149 (RAER…DDAK) and 177–197 (TGREMKQRILSERKKPLNIDH).

This sequence belongs to the troponin T family. Interacts with TPM3.

Functionally, troponin T is the tropomyosin-binding subunit of troponin, the thin filament regulatory complex which confers calcium-sensitivity to striated muscle actomyosin ATPase activity. The sequence is that of Troponin T, slow skeletal muscle (TNNT1) from Sus scrofa (Pig).